The primary structure comprises 326 residues: Immune-associated nucleotide-binding protein 4 (326 aa).

Residues 17–225 enclose the AIG1-type G domain; that stretch reads EPIKNIVLVG…FTDEMHRKIQ (209 aa). The G1 stretch occupies residues 26–33; sequence GRTGNGKS. Residues 26 to 34 and S47 contribute to the GTP site; that span reads GRTGNGKSA. The interval 53–57 is G2; the sequence is GVTMK. A G3 region spans residues 75–78; that stretch reads DTPG. The G4 stretch occupies residues 145–148; the sequence is TGGD. Positions 184-186 are G5; the sequence is DNR. N185 is a binding site for GTP. Residues 217–241 are a coiled coil; that stretch reads TDEMHRKIQKEAETLREQQKEVESK.

The protein belongs to the TRAFAC class TrmE-Era-EngA-EngB-Septin-like GTPase superfamily. AIG1/Toc34/Toc159-like paraseptin GTPase family. IAN subfamily. As to expression, expressed in radicles of the germinating seeds.

The polypeptide is Immune-associated nucleotide-binding protein 4 (Arabidopsis thaliana (Mouse-ear cress)).